A 641-amino-acid polypeptide reads, in one-letter code: Tetracycline resistance protein TetQ (641 aa).

The 244-residue stretch at 1-244 (MNIINLGILA…AITSFILPPA (244 aa)) folds into the tr-type G domain. Residues 10–17 (AHIDAGKT), 74–78 (DTPGH), and 128–131 (NKID) each bind GTP.

This sequence belongs to the TRAFAC class translation factor GTPase superfamily. Classic translation factor GTPase family. TetM/TetO subfamily.

Abolishes the inhibitory effect of tetracyclin on protein synthesis by a non-covalent modification of the ribosomes. The chain is Tetracycline resistance protein TetQ (tetQ) from Xylanibacter ruminicola (Prevotella ruminicola).